The chain runs to 259 residues: MLIVVSPAKTLDYESPLATDLSTQPDFIADSEELIHVCRKLTPLDISSLMKVSDKIASLNAIRFEEWSPIFTSDNSRQALFAFKGDVYTGLDAASFSDDDFDYAQRHLRMLSGLYGLLKPLDLMQPYRLEMGTKLANDRGANLYQFWGNKITEKLNAAIEEQGDKTLINLASNEYFKAVKPALLNADVITPIFKDCKNGQYKIISFYAKKARGLMARFIIENRIATIEELKRFAVDGYYFVSAESSEKELMFKREEQFK.

It belongs to the UPF0246 family.

The protein is UPF0246 protein VSAL_I2547 of Aliivibrio salmonicida (strain LFI1238) (Vibrio salmonicida (strain LFI1238)).